A 259-amino-acid polypeptide reads, in one-letter code: 5'-nucleotidase SurE (259 aa).

A divalent metal cation is bound by residues Asp13, Asp14, Ser44, and Asn100.

Belongs to the SurE nucleotidase family. The cofactor is a divalent metal cation.

It is found in the cytoplasm. It catalyses the reaction a ribonucleoside 5'-phosphate + H2O = a ribonucleoside + phosphate. Nucleotidase that shows phosphatase activity on nucleoside 5'-monophosphates. This chain is 5'-nucleotidase SurE, found in Bacteroides thetaiotaomicron (strain ATCC 29148 / DSM 2079 / JCM 5827 / CCUG 10774 / NCTC 10582 / VPI-5482 / E50).